A 383-amino-acid polypeptide reads, in one-letter code: Probable disease resistance protein At4g19060 (383 aa).

Positions 36–84 (YEKWSSGKQRGSSSKHGNQSTHGDSSPTRNSSGSSKKGRPKANRVETSS) are disordered. A compositionally biased stretch (polar residues) spans 41–70 (SGKQRGSSSKHGNQSTHGDSSPTRNSSGSS). 2 consecutive NB-ARC domains span residues 75 to 184 (PKAN…MFKH) and 207 to 281 (VKEK…LAKA). Position 121–128 (121–128 (GKYGVGKT)) interacts with ATP.

In terms of biological role, possible disease resistance protein. The polypeptide is Probable disease resistance protein At4g19060 (Arabidopsis thaliana (Mouse-ear cress)).